A 93-amino-acid polypeptide reads, in one-letter code: Small ribosomal subunit protein uS19 (93 aa).

Belongs to the universal ribosomal protein uS19 family.

In terms of biological role, protein S19 forms a complex with S13 that binds strongly to the 16S ribosomal RNA. This is Small ribosomal subunit protein uS19 from Leifsonia xyli subsp. xyli (strain CTCB07).